A 116-amino-acid chain; its full sequence is uncharacterized protein (116 aa).

Positions 77-116 are disordered; sequence SATSHYPKADDPQRFARSVSRGPSRVRRPARNSASRPVRR.

This is an uncharacterized protein from Frog virus 3 (isolate Goorha) (FV-3).